The sequence spans 385 residues: 4-hydroxy-3-methylbut-2-en-1-yl diphosphate synthase (flavodoxin) (385 aa).

Residues cysteine 282, cysteine 285, cysteine 317, and glutamate 324 each coordinate [4Fe-4S] cluster.

The protein belongs to the IspG family. Requires [4Fe-4S] cluster as cofactor.

The enzyme catalyses (2E)-4-hydroxy-3-methylbut-2-enyl diphosphate + oxidized [flavodoxin] + H2O + 2 H(+) = 2-C-methyl-D-erythritol 2,4-cyclic diphosphate + reduced [flavodoxin]. Its pathway is isoprenoid biosynthesis; isopentenyl diphosphate biosynthesis via DXP pathway; isopentenyl diphosphate from 1-deoxy-D-xylulose 5-phosphate: step 5/6. Functionally, converts 2C-methyl-D-erythritol 2,4-cyclodiphosphate (ME-2,4cPP) into 1-hydroxy-2-methyl-2-(E)-butenyl 4-diphosphate. The protein is 4-hydroxy-3-methylbut-2-en-1-yl diphosphate synthase (flavodoxin) of Nocardia farcinica (strain IFM 10152).